Consider the following 196-residue polypeptide: Carnitine operon protein CaiE (196 aa).

Positions 176 to 196 (LRQMEENRPRLQGTTDVAPKR) are disordered.

The protein belongs to the transferase hexapeptide repeat family.

The protein operates within amine and polyamine metabolism; carnitine metabolism. Its function is as follows. Overproduction of CaiE stimulates the activity of CaiB and CaiD. The polypeptide is Carnitine operon protein CaiE (Escherichia fergusonii (strain ATCC 35469 / DSM 13698 / CCUG 18766 / IAM 14443 / JCM 21226 / LMG 7866 / NBRC 102419 / NCTC 12128 / CDC 0568-73)).